The sequence spans 146 residues: Ribosome maturation factor RimP (146 aa).

The protein belongs to the RimP family.

The protein resides in the cytoplasm. In terms of biological role, required for maturation of 30S ribosomal subunits. This chain is Ribosome maturation factor RimP, found in Helicobacter pylori (strain ATCC 700392 / 26695) (Campylobacter pylori).